Reading from the N-terminus, the 650-residue chain is Acetyl-coenzyme A synthetase (650 aa).

CoA is bound by residues 191–194, Thr311, and Asn335; that span reads RGGR. Residues 387–389, 411–416, Asp500, and Arg515 each bind ATP; these read GEP and DTWWQT. Ser523 provides a ligand contact to CoA. An ATP-binding site is contributed by Arg526. Mg(2+) is bound by residues Val537, His539, and Val542. A CoA-binding site is contributed by Arg584. An N6-acetyllysine modification is found at Lys609.

It belongs to the ATP-dependent AMP-binding enzyme family. It depends on Mg(2+) as a cofactor. Post-translationally, acetylated. Deacetylation by the SIR2-homolog deacetylase activates the enzyme.

The catalysed reaction is acetate + ATP + CoA = acetyl-CoA + AMP + diphosphate. Its function is as follows. Catalyzes the conversion of acetate into acetyl-CoA (AcCoA), an essential intermediate at the junction of anabolic and catabolic pathways. AcsA undergoes a two-step reaction. In the first half reaction, AcsA combines acetate with ATP to form acetyl-adenylate (AcAMP) intermediate. In the second half reaction, it can then transfer the acetyl group from AcAMP to the sulfhydryl group of CoA, forming the product AcCoA. In Shewanella putrefaciens (strain CN-32 / ATCC BAA-453), this protein is Acetyl-coenzyme A synthetase.